The chain runs to 232 residues: Large ribosomal subunit protein uL1 (232 aa).

It belongs to the universal ribosomal protein uL1 family. Part of the 50S ribosomal subunit.

Functionally, binds directly to 23S rRNA. The L1 stalk is quite mobile in the ribosome, and is involved in E site tRNA release. Its function is as follows. Protein L1 is also a translational repressor protein, it controls the translation of the L11 operon by binding to its mRNA. In Rhizorhabdus wittichii (strain DSM 6014 / CCUG 31198 / JCM 15750 / NBRC 105917 / EY 4224 / RW1) (Sphingomonas wittichii), this protein is Large ribosomal subunit protein uL1.